The following is a 254-amino-acid chain: MFKHIIARTPARSLVDGLTSSHLGKPDYAKALEQHNAYIRALQTCDVDITLLPPDERFPDSVFVEDPVLCTSRCAIITRPGAESRRGETEIIEETVQRFYPGKVERIEAPGTVEAGDIMMVGDHFYIGESARTNAEGARQMIAILEKHGLSGSVVRLEKVLHLKTGLAYLEHNNLLAAGEFVSKPEFQDFNIIEIPEEESYAANCIWVNERVIMPAGYPRTREKIARLGYRVIEVDTSEYRKIDGGVSCMSLRF.

Residues Leu-18, Asp-60, 65-66 (ED), Arg-85, and Arg-132 contribute to the substrate site. His-162 (proton donor) is an active-site residue. His-162 lines the Zn(2+) pocket. Residue Ile-243 coordinates substrate. Residue Cys-249 participates in Zn(2+) binding. Cys-249 functions as the Nucleophile in the catalytic mechanism.

This sequence belongs to the DDAH family. In terms of assembly, homodimer.

It carries out the reaction N(omega),N(omega)-dimethyl-L-arginine + H2O = dimethylamine + L-citrulline. It catalyses the reaction N(omega)-methyl-L-arginine + H2O = L-citrulline + methylamine. With respect to regulation, inhibited by zinc ions. Competitively inhibited by lysine. Functionally, hydrolyzes N(G),N(G)-dimethyl-L-arginine (ADMA) and N(G)-monomethyl-L-arginine (MMA). The protein is N(G),N(G)-dimethylarginine dimethylaminohydrolase of Pseudomonas aeruginosa (strain ATCC 15692 / DSM 22644 / CIP 104116 / JCM 14847 / LMG 12228 / 1C / PRS 101 / PAO1).